Here is a 258-residue protein sequence, read N- to C-terminus: 1-(5-phosphoribosyl)-5-[(5-phosphoribosylamino)methylideneamino] imidazole-4-carboxamide isomerase (258 aa).

Asp-17 acts as the Proton acceptor in catalysis. Asp-136 acts as the Proton donor in catalysis.

This sequence belongs to the HisA/HisF family.

It localises to the cytoplasm. It carries out the reaction 1-(5-phospho-beta-D-ribosyl)-5-[(5-phospho-beta-D-ribosylamino)methylideneamino]imidazole-4-carboxamide = 5-[(5-phospho-1-deoxy-D-ribulos-1-ylimino)methylamino]-1-(5-phospho-beta-D-ribosyl)imidazole-4-carboxamide. It functions in the pathway amino-acid biosynthesis; L-histidine biosynthesis; L-histidine from 5-phospho-alpha-D-ribose 1-diphosphate: step 4/9. The protein is 1-(5-phosphoribosyl)-5-[(5-phosphoribosylamino)methylideneamino] imidazole-4-carboxamide isomerase of Corynebacterium jeikeium (strain K411).